A 676-amino-acid polypeptide reads, in one-letter code: Methionine--tRNA ligase (676 aa).

Residues 15–25 (PYANGPIHLGH) carry the 'HIGH' region motif. Positions 146, 149, 159, and 162 each coordinate Zn(2+). Residues 332-336 (KMSKS) carry the 'KMSKS' region motif. Lys-335 lines the ATP pocket. The tRNA-binding domain maps to 575 to 676 (DFAKIDLRIA…EGAQPGMRVK (102 aa)).

The protein belongs to the class-I aminoacyl-tRNA synthetase family. MetG type 1 subfamily. In terms of assembly, homodimer. Zn(2+) serves as cofactor.

It is found in the cytoplasm. It carries out the reaction tRNA(Met) + L-methionine + ATP = L-methionyl-tRNA(Met) + AMP + diphosphate. Functionally, is required not only for elongation of protein synthesis but also for the initiation of all mRNA translation through initiator tRNA(fMet) aminoacylation. The sequence is that of Methionine--tRNA ligase from Shewanella sp. (strain MR-4).